The chain runs to 120 residues: Ubiquitin domain-containing protein TINCR (120 aa).

A Ubiquitin-like domain is found at 14–83; the sequence is YHIKVHLADE…LQDGSVLLLV (70 aa).

As to expression, detected in stratum corneum (at protein level).

This chain is Ubiquitin domain-containing protein TINCR, found in Homo sapiens (Human).